A 429-amino-acid chain; its full sequence is Adenylosuccinate synthetase (429 aa).

Residues 12–18 and 40–42 contribute to the GTP site; these read GDEGKGK and GHT. Residue D13 is the Proton acceptor of the active site. D13 and G40 together coordinate Mg(2+). IMP is bound by residues 13–16, 38–41, T129, R143, Q224, T239, and R303; these read DEGK and NAGH. The Proton donor role is filled by H41. Substrate is bound at residue 299 to 305; the sequence is ATTGRKR. Residues R305, 331–333, and 413–415 each bind GTP; these read KLD and SVG.

Belongs to the adenylosuccinate synthetase family. In terms of assembly, homodimer. Mg(2+) is required as a cofactor.

The protein resides in the cytoplasm. The enzyme catalyses IMP + L-aspartate + GTP = N(6)-(1,2-dicarboxyethyl)-AMP + GDP + phosphate + 2 H(+). Its pathway is purine metabolism; AMP biosynthesis via de novo pathway; AMP from IMP: step 1/2. In terms of biological role, plays an important role in the de novo pathway of purine nucleotide biosynthesis. Catalyzes the first committed step in the biosynthesis of AMP from IMP. The protein is Adenylosuccinate synthetase of Desulfosudis oleivorans (strain DSM 6200 / JCM 39069 / Hxd3) (Desulfococcus oleovorans).